Consider the following 522-residue polypeptide: MGNIHFVYLLISCLYYSGCSGVNEEERLINDLLIVNKYNKHVRPVKHNNEVVNIALSLTLSNLISLKETDETLTSNVWMDHAWYDHRLTWNASEYSDISILRLPPELVWIPDIVLQNNNDGQYHVAYFCNVLVRPNGYVTWLPPAIFRSSCPINVLYFPFDWQNCSLKFTALNYDANEITMDLMTDTIDGKDYPIEWIIIDPEAFTENGEWEIIHKPAKKNIYPDKFPNGTNYQDVTFYLIIRRKPLFYVINFITPCVLISFLASLAFYLPAESGEKMSTAISVLLAQAVFLLLTSQRLPETALAVPLIGKYLMFIMSLVTGVIVNCGIVLNFHFRTPSTHVLSTRVKQIFLEKLPRILHMSRADESEQPDWQNDLKLRRSSSVGYISKAQEYFNIKSRSELMFEKQSERHGLVPRVTPRIGFGNNNENIAASDQLHDEIKSGIDSTNYIVKQIKEKNAYDEEVGNWNLVGQTIDRLSMFIITPVMVLGTIFIFVMGNFNHPPAKPFEGDPFDYSSDHPRCA.

A signal peptide spans 1-21 (MGNIHFVYLLISCLYYSGCSG). The Extracellular segment spans residues 22–245 (VNEEERLIND…VTFYLIIRRK (224 aa)). N-linked (GlcNAc...) asparagine glycosylation is found at Asn-91, Asn-164, and Asn-229. Cys-151 and Cys-165 form a disulfide bridge. Transmembrane regions (helical) follow at residues 246–270 (PLFYVINFITPCVLISFLASLAFYL), 278–295 (MSTAISVLLAQAVFLLLT), and 312–333 (YLMFIMSLVTGVIVNCGIVLNF). Residues 334-476 (HFRTPSTHVL…WNLVGQTIDR (143 aa)) are Cytoplasmic-facing. Tyr-393 is modified (phosphotyrosine; by Tyr-kinases). Residues 477-497 (LSMFIITPVMVLGTIFIFVMG) form a helical membrane-spanning segment.

The protein belongs to the ligand-gated ion channel (TC 1.A.9) family. Acetylcholine receptor (TC 1.A.9.1) subfamily. As to quaternary structure, pentamer of two alpha chains, and one each of the beta, delta, and gamma chains.

It is found in the postsynaptic cell membrane. The protein resides in the cell membrane. It catalyses the reaction K(+)(in) = K(+)(out). The catalysed reaction is Na(+)(in) = Na(+)(out). Functionally, after binding acetylcholine, the AChR responds by an extensive change in conformation that affects all subunits and leads to opening of an ion-conducting channel across the plasma membrane. The chain is Acetylcholine receptor subunit delta (chrnd) from Tetronarce californica (Pacific electric ray).